A 420-amino-acid chain; its full sequence is Glutaryl-CoA dehydrogenase, mitochondrial (420 aa).

125-126 (RS) contacts substrate. Residues 164–167 (FGLT), S173, and 198–200 (WIT) contribute to the FAD site. S173 serves as a coordination point for substrate. Substrate contacts are provided by residues 273 to 277 (FSCLN) and R280. E400 (proton acceptor) is an active-site residue. The FAD site is built by T402 and F420.

The protein belongs to the acyl-CoA dehydrogenase family. The cofactor is FAD.

It is found in the mitochondrion matrix. It catalyses the reaction glutaryl-CoA + oxidized [electron-transfer flavoprotein] + 2 H(+) = (2E)-butenoyl-CoA + reduced [electron-transfer flavoprotein] + CO2. It functions in the pathway amino-acid metabolism; lysine degradation. Its pathway is amino-acid metabolism; tryptophan metabolism. The polypeptide is Glutaryl-CoA dehydrogenase, mitochondrial (gcdh) (Dictyostelium discoideum (Social amoeba)).